Here is a 472-residue protein sequence, read N- to C-terminus: L-aspartate oxidase (472 aa).

FAD contacts are provided by residues 7–10 (SGIA), serine 29, 36–37 (ST), 42–43 (GG), and aspartate 191. Arginine 257 (proton donor/acceptor) is an active-site residue. FAD-binding positions include glutamate 337 and 353–354 (SL).

Belongs to the FAD-dependent oxidoreductase 2 family. NadB subfamily. In terms of assembly, monomer. FAD serves as cofactor.

It localises to the cytoplasm. The catalysed reaction is L-aspartate + O2 = iminosuccinate + H2O2. Its pathway is cofactor biosynthesis; NAD(+) biosynthesis; iminoaspartate from L-aspartate (oxidase route): step 1/1. Functionally, catalyzes the oxidation of L-aspartate to iminoaspartate, the first step in the de novo biosynthesis of NAD(+). Can also use L-asparagine, but not L-phenylalanine, L-glutamate, glycine, L-proline, L-alanine and D-aspartate. This is L-aspartate oxidase from Sulfurisphaera tokodaii (strain DSM 16993 / JCM 10545 / NBRC 100140 / 7) (Sulfolobus tokodaii).